A 60-amino-acid polypeptide reads, in one-letter code: Temporin-MT5 (60 aa).

The signal sequence occupies residues 1–22 (MFTLKKPLLLLFFLATINLSLC). A propeptide spans 23 to 44 (EQERNAEEERRDEPDERNAEVE) (removed in mature form). Phenylalanine 58 is subject to Phenylalanine amide.

It belongs to the frog skin active peptide (FSAP) family. Temporin subfamily. As to expression, expressed by the skin glands.

Its subcellular location is the secreted. Antimicrobial peptide. The protein is Temporin-MT5 of Amolops mantzorum (Sichuan torrent frog).